The chain runs to 136 residues: Early E3 15.3 kDa protein (136 aa).

It belongs to the adenoviridae E3_15 family.

Its function is as follows. Protects virus-infected cells from TNF-induced cytolysis. The protein is Early E3 15.3 kDa protein of Human adenovirus B serotype 3 (HAdV-3).